Consider the following 410-residue polypeptide: Hemocyanin, beta-C chain unit D (410 aa).

His-44 and His-55 together coordinate Cu cation. The cysteines at positions 50 and 59 are disulfide-linked. Positions 60 to 62 (CVH) form a cross-link, 2'-(S-cysteinyl)-histidine (Cys-His). 4 residues coordinate Cu cation: His-71, His-175, His-179, and His-206. An intrachain disulfide couples Cys-165 to Cys-232. The N-linked (GlcNAc...) asparagine glycan is linked to Asn-253. A disulfide bond links Cys-321 and Cys-332.

It belongs to the tyrosinase family. Hemocyanin subfamily. As to quaternary structure, decamers of large identical subunits (450 kDa), each containing 8 globular oxygen-binding functional units. Cu(2+) serves as cofactor.

Its function is as follows. Hemocyanins are copper-containing oxygen carriers occurring freely dissolved in the hemolymph of many mollusks and arthropods. The protein is Hemocyanin, beta-C chain unit D of Helix pomatia (Roman snail).